We begin with the raw amino-acid sequence, 429 residues long: Patatin-like phospholipase domain-containing protein 5 (429 aa).

The region spanning 12–181 (LSFSGAGYLG…SNNLPFADCP (170 aa)) is the PNPLA domain. A GXGXXG motif is present at residues 16 to 21 (GAGYLG). The short motif at 47–51 (GSSSG) is the GXSXG element. Ser-49 (nucleophile) is an active-site residue. Asp-168 acts as the Proton acceptor in catalysis. The DGA/G motif lies at 168–170 (DGA).

In terms of tissue distribution, expressed in brain and pituitary gland.

The catalysed reaction is a triacylglycerol + H2O = a diacylglycerol + a fatty acid + H(+). Functionally, has abundant triacylglycerol lipase activity. The sequence is that of Patatin-like phospholipase domain-containing protein 5 from Homo sapiens (Human).